Reading from the N-terminus, the 280-residue chain is Bifunctional protein FolD (280 aa).

Residues 164-166 (GRS), Ser-189, and Val-230 contribute to the NADP(+) site.

Belongs to the tetrahydrofolate dehydrogenase/cyclohydrolase family. Homodimer.

The catalysed reaction is (6R)-5,10-methylene-5,6,7,8-tetrahydrofolate + NADP(+) = (6R)-5,10-methenyltetrahydrofolate + NADPH. It catalyses the reaction (6R)-5,10-methenyltetrahydrofolate + H2O = (6R)-10-formyltetrahydrofolate + H(+). The protein operates within one-carbon metabolism; tetrahydrofolate interconversion. In terms of biological role, catalyzes the oxidation of 5,10-methylenetetrahydrofolate to 5,10-methenyltetrahydrofolate and then the hydrolysis of 5,10-methenyltetrahydrofolate to 10-formyltetrahydrofolate. The polypeptide is Bifunctional protein FolD (Geotalea daltonii (strain DSM 22248 / JCM 15807 / FRC-32) (Geobacter daltonii)).